The primary structure comprises 327 residues: Aspartate--ammonia ligase (327 aa).

The protein belongs to the class-II aminoacyl-tRNA synthetase family. AsnA subfamily.

The protein localises to the cytoplasm. The catalysed reaction is L-aspartate + NH4(+) + ATP = L-asparagine + AMP + diphosphate + H(+). It participates in amino-acid biosynthesis; L-asparagine biosynthesis; L-asparagine from L-aspartate (ammonia route): step 1/1. The chain is Aspartate--ammonia ligase from Bacillus cereus (strain G9842).